The sequence spans 379 residues: Cytochrome b (379 aa).

4 helical membrane passes run 33 to 53, 77 to 98, 113 to 133, and 178 to 198; these read FGSL…FLAM, WLIR…FIHV, WNIG…GYVL, and FFAF…VHLL. His83 and His97 together coordinate heme b. Heme b contacts are provided by His182 and His196. Residue His201 participates in a ubiquinone binding. Transmembrane regions (helical) follow at residues 226-246, 288-308, 320-340, and 347-367; these read TKDL…ALFF, LGGV…PLLN, VTQI…WIGG, and FTTI…ILIP.

The protein belongs to the cytochrome b family. The cytochrome bc1 complex contains 11 subunits: 3 respiratory subunits (MT-CYB, CYC1 and UQCRFS1), 2 core proteins (UQCRC1 and UQCRC2) and 6 low-molecular weight proteins (UQCRH/QCR6, UQCRB/QCR7, UQCRQ/QCR8, UQCR10/QCR9, UQCR11/QCR10 and a cleavage product of UQCRFS1). This cytochrome bc1 complex then forms a dimer. It depends on heme b as a cofactor.

The protein resides in the mitochondrion inner membrane. Its function is as follows. Component of the ubiquinol-cytochrome c reductase complex (complex III or cytochrome b-c1 complex) that is part of the mitochondrial respiratory chain. The b-c1 complex mediates electron transfer from ubiquinol to cytochrome c. Contributes to the generation of a proton gradient across the mitochondrial membrane that is then used for ATP synthesis. In Akodon reigi (Reig's grass mouse), this protein is Cytochrome b (MT-CYB).